The chain runs to 104 residues: UPF0145 protein GTNG_1265 (104 aa).

The protein belongs to the UPF0145 family.

The polypeptide is UPF0145 protein GTNG_1265 (Geobacillus thermodenitrificans (strain NG80-2)).